We begin with the raw amino-acid sequence, 792 residues long: Phenylalanine--tRNA ligase beta subunit (792 aa).

In terms of domain architecture, tRNA-binding spans 40–156 (FPRTENLIVG…AKLNDIDPLK (117 aa)). A B5 domain is found at 404 to 472 (LKDNLIDFDS…KKINVNNLEL (69 aa)). Residues D450, D456, E459, and E460 each coordinate Mg(2+).

This sequence belongs to the phenylalanyl-tRNA synthetase beta subunit family. Type 1 subfamily. In terms of assembly, tetramer of two alpha and two beta subunits. The cofactor is Mg(2+).

Its subcellular location is the cytoplasm. It carries out the reaction tRNA(Phe) + L-phenylalanine + ATP = L-phenylalanyl-tRNA(Phe) + AMP + diphosphate + H(+). The polypeptide is Phenylalanine--tRNA ligase beta subunit (Malacoplasma penetrans (strain HF-2) (Mycoplasma penetrans)).